The following is a 166-amino-acid chain: Interferon gamma (166 aa).

The first 23 residues, 1 to 23 (MKYTSYILAFQLCIVLGSLGCYC), serve as a signal peptide directing secretion. At Q24 the chain carries Pyrrolidone carboxylic acid. The N-linked (GlcNAc...) asparagine glycan is linked to N48. N-linked (GlcNAc...) asparagine; in dimeric form glycosylation occurs at N120. Residues 147–166 (AKTGKRKRSQMLFRGRRASQ) are disordered. The span at 149–166 (TGKRKRSQMLFRGRRASQ) shows a compositional bias: basic residues. Positions 162–166 (RRASQ) are excised as a propeptide.

This sequence belongs to the type II (or gamma) interferon family. Homodimer. Interacts with IFNGR1 (via extracellular domain); this interaction promotes IFNGR1 dimerization. Proteolytic processing produces C-terminal heterogeneity, with proteins ending alternatively at Gly-150, Met-157 or Gly-161. Released primarily from activated T lymphocytes.

Its subcellular location is the secreted. In terms of biological role, type II interferon produced by immune cells such as T-cells and NK cells that plays crucial roles in antimicrobial, antiviral, and antitumor responses by activating effector immune cells and enhancing antigen presentation. Primarily signals through the JAK-STAT pathway after interaction with its receptor IFNGR1 to affect gene regulation. Upon IFNG binding, IFNGR1 intracellular domain opens out to allow association of downstream signaling components JAK2, JAK1 and STAT1, leading to STAT1 activation, nuclear translocation and transcription of IFNG-regulated genes. Many of the induced genes are transcription factors such as IRF1 that are able to further drive regulation of a next wave of transcription. Plays a role in class I antigen presentation pathway by inducing a replacement of catalytic proteasome subunits with immunoproteasome subunits. In turn, increases the quantity, quality, and repertoire of peptides for class I MHC loading. Increases the efficiency of peptide generation also by inducing the expression of activator PA28 that associates with the proteasome and alters its proteolytic cleavage preference. Up-regulates as well MHC II complexes on the cell surface by promoting expression of several key molecules such as cathepsins B/CTSB, H/CTSH, and L/CTSL. Participates in the regulation of hematopoietic stem cells during development and under homeostatic conditions by affecting their development, quiescence, and differentiation. This is Interferon gamma (IFNG) from Homo sapiens (Human).